A 368-amino-acid chain; its full sequence is L-cysteine desulfhydrase Cds1 (368 aa).

Lysine 67 carries the N6-(pyridoxal phosphate)lysine modification. Residues 203–207 (GTGGT) and serine 299 contribute to the pyridoxal 5'-phosphate site.

It belongs to the cysteine synthase/cystathionine beta-synthase family. Cds1 subfamily. Pyridoxal 5'-phosphate serves as cofactor.

It is found in the cytoplasm. The enzyme catalyses L-cysteine + H2O = hydrogen sulfide + pyruvate + NH4(+) + H(+). A cysteine desulfhydrase that generates hydrogen sulfide, H(2)S. The H(2)S produced by this enzyme stimulates respiration in M.tuberculosis, mediated primarily via cytochrome bd with a lesser contribution from cytochrome bc1/aa3. H(2)S modulates the balance between respiration and glycolysis, and also contributes to redox homeostasis. Probably eliminates toxic levels of Cys (which can induce oxidative stress). In Mycobacterium tuberculosis (strain ATCC 25177 / H37Ra), this protein is L-cysteine desulfhydrase Cds1.